The chain runs to 246 residues: Ly6/PLAUR domain-containing protein 4 (246 aa).

Positions 1–26 (MILQAWRSLQLLYLLEAISLLPCTEA) are cleaved as a signal peptide. N-linked (GlcNAc...) asparagine glycosylation is present at Asn-117. Positions 142–223 (CPSCVGKHDQ…INVLDKSEAV (82 aa)) constitute a UPAR/Ly6 domain. Ala-225 is lipidated: GPI-anchor amidated alanine. The propeptide at 226-246 (GHCSQGISWSVLLCLLILLRD) is removed in mature form.

The protein resides in the cell membrane. The polypeptide is Ly6/PLAUR domain-containing protein 4 (Lypd4) (Mus musculus (Mouse)).